A 357-amino-acid polypeptide reads, in one-letter code: Iron deficiency-induced protein A (357 aa).

Residues 1–36 (MSESMFSRRDFLLGGTALAGTLLLDSFGDWRRRAEA) constitute a signal peptide (tat-type signal). Residues H48, Y49, Y182, Y238, and Y239 each contribute to the Fe cation site.

The protein belongs to the bacterial solute-binding protein 1 family. Predicted to be exported by the Tat system. The position of the signal peptide cleavage has not been experimentally proven.

Its subcellular location is the cellular thylakoid membrane. Functionally, plays an important role in protecting the acceptor side of photosystem II (PSII) against oxidative damage, especially under iron-limiting growth conditions. Its function is as follows. May also be part of a periplasmic ABC transporter complex involved in iron import. The sequence is that of Iron deficiency-induced protein A (idiA) from Synechococcus elongatus (strain ATCC 33912 / PCC 7942 / FACHB-805) (Anacystis nidulans R2).